Here is a 320-residue protein sequence, read N- to C-terminus: Ferrochelatase (320 aa).

H194 and E275 together coordinate Fe cation.

It belongs to the ferrochelatase family. As to quaternary structure, monomer.

It is found in the cytoplasm. It catalyses the reaction heme b + 2 H(+) = protoporphyrin IX + Fe(2+). It participates in porphyrin-containing compound metabolism; protoheme biosynthesis; protoheme from protoporphyrin-IX: step 1/1. Functionally, catalyzes the ferrous insertion into protoporphyrin IX. The polypeptide is Ferrochelatase (Escherichia coli O9:H4 (strain HS)).